The primary structure comprises 499 residues: Potassium voltage-gated channel subfamily A member 2 (499 aa).

Residues 1–26 (MTVATGDPVDEAAALPGHPQDTYDPE) form a disordered region. The tract at residues 1–125 (MTVATGDPVD…YELGEEAMEM (125 aa)) is tetramerization domain. Residues 1–160 (MTVATGDPVD…LLFEYPESSG (160 aa)) lie on the Cytoplasmic side of the membrane. The chain crosses the membrane as a helical span at residues 161–182 (PARIIAIVSVMVILISIVSFCL). Residues 183 to 221 (ETLPIFRDENEDMHGGGVTFHTYSNSTIGYQQSTSFTDP) are Extracellular-facing. N207 is a glycosylation site (N-linked (GlcNAc...) asparagine). A helical membrane pass occupies residues 222–243 (FFIVETLCIIWFSFEFLVRFFA). C244 carries S-palmitoyl cysteine lipidation. At 244 to 254 (CPSKAGFFTNI) the chain is on the cytoplasmic side. A helical membrane pass occupies residues 255 to 275 (MNIIDIVAIIPYFITLGTELA). Residues 276 to 289 (EKPEDAQQGQQAMS) lie on the Extracellular side of the membrane. The helical; Voltage-sensor transmembrane segment at 290–310 (LAILRVIRLVRVFRIFKLSRH) threads the bilayer. The Cytoplasmic segment spans residues 311-325 (SKGLQILGQTLKASM). The S4-S5 linker stretch occupies residues 312–325 (KGLQILGQTLKASM). The helical transmembrane segment at 326 to 347 (RELGLLIFFLFIGVILFSSAVY) threads the bilayer. Over 348 to 361 (FAEADERDSQFPSI) the chain is Extracellular. The helical intramembrane region spans 362 to 373 (PDAFWWAVVSMT). The Selectivity filter signature appears at 374-379 (TVGYGD). An intramembrane segment occupies 374–381 (TVGYGDMV). The Extracellular portion of the chain corresponds to 382–388 (PTTIGGK). Residues 389 to 417 (IVGSLCAIAGVLTIALPVPVIVSNFNYFY) form a helical membrane-spanning segment. Over 418-499 (HRETEGEEQA…VNITKMLTDV (82 aa)) the chain is Cytoplasmic. Y429 carries the post-translational modification Phosphotyrosine. S434, S440, S441, and S449 each carry phosphoserine. Y458 carries the phosphotyrosine modification. Position 468 is a phosphoserine (S468). A PDZ-binding motif is present at residues 497–499 (TDV).

It belongs to the potassium channel family. A (Shaker) (TC 1.A.1.2) subfamily. Kv1.2/KCNA2 sub-subfamily. In terms of assembly, homotetramer and heterotetramer with other channel-forming alpha subunits, such as KCNA1, KCNA4, KCNA5, KCNA6 and KCNA7. Channel activity is regulated by interaction with beta subunits, including KCNAB1 and KCNAB2. Identified in a complex with KCNA1 and KCNAB2. Identified in a complex with KCNA5 and KCNAB1. Identified in a complex with KCNA4 and FYN. Interacts with PTK2B. Interacts (via C-terminus) with CTTN. Interacts with ADAM22. Interacts with CNTNAP2. Interacts (via C-terminus) with the PDZ domains of DLG1, DLG2 and DLG4. Interacts (via N-terminal cytoplasmic domain) with RHOA (GTP-bound form); this regulates channel activity by reducing location at the cell surface in response to CHRM1 activation. Interacts with DRD2. Interacts with SIGMAR1; cocaine consumption leads to increased interaction. Interacts with ADAM11. Interacts with LYNX1. Post-translationally, phosphorylated on tyrosine residues; phosphorylation increases in response to ischemia. Phosphorylated on tyrosine residues by activated PTK2B/PYK2. Phosphorylation on tyrosine residues suppresses ion channel activity. Phosphorylated on tyrosine residues in response to CHRM1 activation; this abolishes interaction with CTTN. This is probably due to endocytosis of the phosphorylated channel subunits. Phosphorylated on serine residues in response to increased cAMP levels; phosphorylation is apparently not catalyzed by PKA. N-glycosylated, with complex, sialylated N-glycans. In terms of tissue distribution, detected in brain. Detected in cerebellum. Detected in mitral cells in the olfactory bulb. Detected in cochlea. Detected in cerebellum, particularly in the basket cell axon plexus and in the terminal regions around Purkinje cells (at protein level). Detected in juxtaparanodal regions in sciatic nerve. Detected in Schwann cells from sciatic nerve. Detected in dopamine neurons in substantia nigra. Detected in large myelinated fibers in juxtaparanodes in the CA3 and CA1 areas of the hippocampus. Detected in brain, in punctae on fiber tracts in brain stem and spinal cord, and on axons in the juxtaparanodal regions of the node of Ranvier (at protein level). Detected in dopamine neurons in the midbrain.

Its subcellular location is the cell membrane. The protein resides in the membrane. It is found in the cell projection. It localises to the axon. The protein localises to the synapse. Its subcellular location is the endoplasmic reticulum membrane. The protein resides in the lamellipodium membrane. It is found in the synaptosome. It localises to the presynaptic cell membrane. The protein localises to the dendrite. Its subcellular location is the perikaryon. The protein resides in the cell junction. It is found in the paranodal septate junction. It catalyses the reaction K(+)(in) = K(+)(out). Its activity is regulated as follows. Inhibited by 4-aminopyridine (4-AP), dendrotoxin (DTX) and charybdotoxin (CTX), but not by tetraethylammonium (TEA). Inhibited by tityustoxin-K alpha (TsTX-Kalpha), a toxin that is highly specific for KCNA2. Inhibited by maurotoxin. Inhibited by kappaM conotoxins kappaM-RIIIJ and kappaM-RIIIK. Functionally, voltage-gated potassium channel that mediates transmembrane potassium transport in excitable membranes, primarily in the brain and the central nervous system, but also in the cardiovascular system. Prevents aberrant action potential firing and regulates neuronal output. Forms tetrameric potassium-selective channels through which potassium ions pass in accordance with their electrochemical gradient. The channel alternates between opened and closed conformations in response to the voltage difference across the membrane. Can form functional homotetrameric channels and heterotetrameric channels that contain variable proportions of KCNA1, KCNA2, KCNA4, KCNA5, KCNA6, KCNA7, and possibly other family members as well; channel properties depend on the type of alpha subunits that are part of the channel. Channel properties are modulated by cytoplasmic beta subunits that regulate the subcellular location of the alpha subunits and promote rapid inactivation of delayed rectifier potassium channels. In vivo, membranes probably contain a mixture of heteromeric potassium channel complexes, making it difficult to assign currents observed in intact tissues to any particular potassium channel family member. Homotetrameric KCNA2 forms a delayed-rectifier potassium channel that opens in response to membrane depolarization, followed by slow spontaneous channel closure. In contrast, a heteromultimer formed by KCNA2 and KCNA4 shows rapid inactivation. Contributes to the regulation of action potentials in neurons. KCNA2-containing channels play a presynaptic role and prevent hyperexcitability and aberrant action potential firing. Response to toxins that are selective for KCNA1, respectively for KCNA2, suggests that heteromeric potassium channels composed of both KCNA1 and KCNA2 play a role in pacemaking and regulate the output of deep cerebellar nuclear neurons. Response to toxins that are selective for KCNA2-containing potassium channels suggests that in Purkinje cells, dendritic subthreshold KCNA2-containing potassium channels prevent random spontaneous calcium spikes, suppressing dendritic hyperexcitability without hindering the generation of somatic action potentials, and thereby play an important role in motor coordination. KCNA2-containing channels play a role in GABAergic transmission from basket cells to Purkinje cells in the cerebellum, and thereby play an import role in motor coordination. Plays a role in the induction of long-term potentiation of neuron excitability in the CA3 layer of the hippocampus. May function as down-stream effector for G protein-coupled receptors and inhibit GABAergic inputs to basolateral amygdala neurons. May contribute to the regulation of neurotransmitter release, such as gamma-aminobutyric acid (GABA). Contributes to the regulation of the axonal release of the neurotransmitter dopamine. Reduced KCNA2 expression plays a role in the perception of neuropathic pain after peripheral nerve injury, but not acute pain. Plays a role in the regulation of the time spent in non-rapid eye movement (NREM) sleep. The sequence is that of Potassium voltage-gated channel subfamily A member 2 (Kcna2) from Mus musculus (Mouse).